Reading from the N-terminus, the 412-residue chain is Multifunctional CCA protein (412 aa).

ATP-binding residues include Gly-8 and Arg-11. Positions 8 and 11 each coordinate CTP. 2 residues coordinate Mg(2+): Glu-21 and Asp-23. 3 residues coordinate ATP: Arg-91, Arg-137, and Arg-140. The CTP site is built by Arg-91, Arg-137, and Arg-140. The region spanning 228–329 is the HD domain; sequence CGIHTLMSLQ…WRLLQRLDVL (102 aa).

The protein belongs to the tRNA nucleotidyltransferase/poly(A) polymerase family. Bacterial CCA-adding enzyme type 1 subfamily. As to quaternary structure, monomer. Can also form homodimers and oligomers. Mg(2+) is required as a cofactor. Requires Ni(2+) as cofactor.

It carries out the reaction a tRNA precursor + 2 CTP + ATP = a tRNA with a 3' CCA end + 3 diphosphate. It catalyses the reaction a tRNA with a 3' CCA end + 2 CTP + ATP = a tRNA with a 3' CCACCA end + 3 diphosphate. Functionally, catalyzes the addition and repair of the essential 3'-terminal CCA sequence in tRNAs without using a nucleic acid template. Adds these three nucleotides in the order of C, C, and A to the tRNA nucleotide-73, using CTP and ATP as substrates and producing inorganic pyrophosphate. tRNA 3'-terminal CCA addition is required both for tRNA processing and repair. Also involved in tRNA surveillance by mediating tandem CCA addition to generate a CCACCA at the 3' terminus of unstable tRNAs. While stable tRNAs receive only 3'-terminal CCA, unstable tRNAs are marked with CCACCA and rapidly degraded. The polypeptide is Multifunctional CCA protein (Acinetobacter baumannii (strain ATCC 17978 / DSM 105126 / CIP 53.77 / LMG 1025 / NCDC KC755 / 5377)).